The sequence spans 143 residues: Sirohydrochlorin cobaltochelatase (143 aa).

Residue histidine 9 is the Proton acceptor of the active site. Histidine 9 is a binding site for Co(2+). Histidine 9 contacts Ni(2+). Substrate is bound by residues glutamate 45 and 70 to 75 (LAHGVH). Histidine 75 is a Co(2+) binding site. Histidine 75 contacts Ni(2+).

It belongs to the CbiX family. CbiXS subfamily. In terms of assembly, homotetramer; dimer of dimers.

It catalyses the reaction Co-sirohydrochlorin + 2 H(+) = sirohydrochlorin + Co(2+). It carries out the reaction Ni-sirohydrochlorin + 2 H(+) = sirohydrochlorin + Ni(2+). It participates in cofactor biosynthesis; adenosylcobalamin biosynthesis; cob(II)yrinate a,c-diamide from sirohydrochlorin (anaerobic route): step 1/10. Its function is as follows. Catalyzes the insertion of Co(2+) into sirohydrochlorin as part of the anaerobic pathway to cobalamin biosynthesis. Involved in the biosynthesis of the unique nickel-containing tetrapyrrole coenzyme F430, the prosthetic group of methyl-coenzyme M reductase (MCR), which plays a key role in methanogenesis and anaerobic methane oxidation. Catalyzes the insertion of Ni(2+) into sirohydrochlorin to yield Ni-sirohydrochlorin. The polypeptide is Sirohydrochlorin cobaltochelatase (Methanopyrus kandleri (strain AV19 / DSM 6324 / JCM 9639 / NBRC 100938)).